The following is a 420-amino-acid chain: UDP-N-acetylglucosamine 1-carboxyvinyltransferase (420 aa).

22 to 23 (KN) contacts phosphoenolpyruvate. Arginine 92 contributes to the UDP-N-acetyl-alpha-D-glucosamine binding site. Catalysis depends on cysteine 116, which acts as the Proton donor. Position 116 is a 2-(S-cysteinyl)pyruvic acid O-phosphothioketal (cysteine 116). UDP-N-acetyl-alpha-D-glucosamine contacts are provided by residues 121 to 125 (RPVDQ), aspartate 304, and isoleucine 326.

The protein belongs to the EPSP synthase family. MurA subfamily.

It is found in the cytoplasm. The enzyme catalyses phosphoenolpyruvate + UDP-N-acetyl-alpha-D-glucosamine = UDP-N-acetyl-3-O-(1-carboxyvinyl)-alpha-D-glucosamine + phosphate. The protein operates within cell wall biogenesis; peptidoglycan biosynthesis. In terms of biological role, cell wall formation. Adds enolpyruvyl to UDP-N-acetylglucosamine. This Paraburkholderia phymatum (strain DSM 17167 / CIP 108236 / LMG 21445 / STM815) (Burkholderia phymatum) protein is UDP-N-acetylglucosamine 1-carboxyvinyltransferase.